Here is a 201-residue protein sequence, read N- to C-terminus: MPVGVPKVPYRLPGDVQVQWIDLYNRLYRERILFLGQTVNYEIANQIIGLMLYLNGDDKSKDMYLYINSPGGAVVPGIAIYDTMQFVEPEIRTICMGVAASMGSFILTGGEITKRIALPHARVMIHQPSSSYYKDQAGELIMEAEEVLKLRDCITKVYVQRTGKPISVISEDMERDVFMSAKEAKEYGIVDLVALDVDSNS.

The Nucleophile role is filled by serine 101. Residue histidine 126 is part of the active site.

The protein belongs to the peptidase S14 family. Component of the chloroplastic Clp protease core complex.

The protein resides in the plastid. The protein localises to the chloroplast stroma. The enzyme catalyses Hydrolysis of proteins to small peptides in the presence of ATP and magnesium. alpha-casein is the usual test substrate. In the absence of ATP, only oligopeptides shorter than five residues are hydrolyzed (such as succinyl-Leu-Tyr-|-NHMec, and Leu-Tyr-Leu-|-Tyr-Trp, in which cleavage of the -Tyr-|-Leu- and -Tyr-|-Trp bonds also occurs).. Its function is as follows. Cleaves peptides in various proteins in a process that requires ATP hydrolysis. Has a chymotrypsin-like activity. Plays a major role in the degradation of misfolded proteins. The polypeptide is ATP-dependent Clp protease proteolytic subunit (Chaetosphaeridium globosum (Charophycean green alga)).